A 108-amino-acid chain; its full sequence is MEIAFLNSLVVTSPGFYKAEKITLDEVKQWLKHYDGRYKSFIGHKSTAQFLQKLLGIRIEQNRKTFRHMKYQKAICFSLYERYPENVLLTQRDLEKARYQFYLLTRLD.

This is an uncharacterized protein from Bacillus subtilis (strain 168).